A 56-amino-acid chain; its full sequence is uncharacterized protein (56 aa).

This is an uncharacterized protein from Lepidoptera (butterflies and moths).